A 443-amino-acid polypeptide reads, in one-letter code: Phosphoglucosamine mutase (443 aa).

Residue Ser101 is the Phosphoserine intermediate of the active site. 4 residues coordinate Mg(2+): Ser101, Asp239, Asp241, and Asp243. Residue Ser101 is modified to Phosphoserine.

The protein belongs to the phosphohexose mutase family. Mg(2+) is required as a cofactor. Activated by phosphorylation.

The enzyme catalyses alpha-D-glucosamine 1-phosphate = D-glucosamine 6-phosphate. Catalyzes the conversion of glucosamine-6-phosphate to glucosamine-1-phosphate. The protein is Phosphoglucosamine mutase of Francisella tularensis subsp. novicida (strain U112).